A 351-amino-acid chain; its full sequence is Tetraacyldisaccharide 4'-kinase (351 aa).

Residue 47–54 participates in ATP binding; that stretch reads KAGGTGKT.

The protein belongs to the LpxK family.

The catalysed reaction is a lipid A disaccharide + ATP = a lipid IVA + ADP + H(+). It participates in glycolipid biosynthesis; lipid IV(A) biosynthesis; lipid IV(A) from (3R)-3-hydroxytetradecanoyl-[acyl-carrier-protein] and UDP-N-acetyl-alpha-D-glucosamine: step 6/6. Its function is as follows. Transfers the gamma-phosphate of ATP to the 4'-position of a tetraacyldisaccharide 1-phosphate intermediate (termed DS-1-P) to form tetraacyldisaccharide 1,4'-bis-phosphate (lipid IVA). The sequence is that of Tetraacyldisaccharide 4'-kinase from Cytophaga hutchinsonii (strain ATCC 33406 / DSM 1761 / CIP 103989 / NBRC 15051 / NCIMB 9469 / D465).